Consider the following 1006-residue polypeptide: Unconventional myosin-Id (1006 aa).

Residue Ala2 is modified to N-acetylalanine. Residues 9–695 (FGKADFVLMD…TLFTLEELRA (687 aa)) enclose the Myosin motor domain. 102–109 (GESGAGKT) contributes to the ATP binding site. Ser200 is subject to Phosphoserine. Tyr536 carries the phosphotyrosine modification. The tract at residues 572–594 (MIALVDNLASKEPYYVRCIKPND) is actin-binding. IQ domains lie at 699 to 719 (VRVVLFLQKVWRGTLARMRYK) and 721 to 741 (TKAALTIIRYYRRYKVKSYIH). The interval 776–896 (LQSIFNRWRA…MDPTKQYKVM (121 aa)) is interaction with calmodulin. Residues 812 to 1005 (GQRADLGLQR…RSGFILSVPG (194 aa)) enclose the TH1 domain.

It belongs to the TRAFAC class myosin-kinesin ATPase superfamily. Myosin family. Interacts (via the two IQ motifs) with calmodulin. Binds an additional calmodulin chain via a third, C-terminal region. Interacts with F-actin. Detected on tracheal epithelial cells, and on epithelial cells and brush border cells in duodenum, jejunum and ileum. Detected on myelinated white matter in the cerebellum, and the myelinated part of the optic nerve. Detected on mature oligodendrocites. Detected on the outside of the myelin sheet that surrounds axons (at protein level). Ubiquitous. Highest levels in adult brain, and spinal cord. Moderate levels in lung, kidney, liver and spleen. Low levels in testis and heart (at protein level).

Its subcellular location is the cytoplasm. It localises to the perikaryon. The protein resides in the cell projection. It is found in the dendrite. The protein localises to the early endosome. Its subcellular location is the cell cortex. In terms of biological role, unconventional myosin that functions as actin-based motor protein with ATPase activity. Plays a role in endosomal protein trafficking, and especially in the transfer of cargo proteins from early to recycling endosomes. Required for normal planar cell polarity in ciliated tracheal cells, for normal rotational polarity of cilia, and for coordinated, unidirectional ciliary movement in the trachea. Required for normal, polarized cilia organization in brain ependymal epithelial cells. This chain is Unconventional myosin-Id (Myo1d), found in Rattus norvegicus (Rat).